Consider the following 172-residue polypeptide: Ribosome maturation factor RimM (172 aa).

Positions 95 to 168 constitute a PRC barrel domain; that stretch reads AEGEFYYHQI…RVDVEIMEGL (74 aa).

It belongs to the RimM family. As to quaternary structure, binds ribosomal protein uS19.

The protein resides in the cytoplasm. Functionally, an accessory protein needed during the final step in the assembly of 30S ribosomal subunit, possibly for assembly of the head region. Essential for efficient processing of 16S rRNA. May be needed both before and after RbfA during the maturation of 16S rRNA. It has affinity for free ribosomal 30S subunits but not for 70S ribosomes. The sequence is that of Ribosome maturation factor RimM from Streptococcus equi subsp. zooepidemicus (strain MGCS10565).